The primary structure comprises 376 residues: Erythronate-4-phosphate dehydrogenase (376 aa).

Substrate contacts are provided by S45 and T67. D147 is an NAD(+) binding site. The active site involves R209. D233 is an NAD(+) binding site. The active site involves E238. The active-site Proton donor is the H255. NAD(+) is bound at residue G258. A substrate-binding site is contributed by Y259.

Belongs to the D-isomer specific 2-hydroxyacid dehydrogenase family. PdxB subfamily. As to quaternary structure, homodimer.

Its subcellular location is the cytoplasm. It carries out the reaction 4-phospho-D-erythronate + NAD(+) = (R)-3-hydroxy-2-oxo-4-phosphooxybutanoate + NADH + H(+). It participates in cofactor biosynthesis; pyridoxine 5'-phosphate biosynthesis; pyridoxine 5'-phosphate from D-erythrose 4-phosphate: step 2/5. Its function is as follows. Catalyzes the oxidation of erythronate-4-phosphate to 3-hydroxy-2-oxo-4-phosphonooxybutanoate. The sequence is that of Erythronate-4-phosphate dehydrogenase from Shewanella sp. (strain ANA-3).